Consider the following 118-residue polypeptide: Basic phospholipase A2 4 (118 aa).

Cystine bridges form between Cys-11-Cys-71, Cys-27-Cys-117, Cys-29-Cys-45, Cys-44-Cys-98, Cys-51-Cys-91, Cys-60-Cys-84, and Cys-78-Cys-89. Positions 28, 30, and 32 each coordinate Ca(2+). His-48 is a catalytic residue. Position 49 (Asp-49) interacts with Ca(2+). The active site involves Asp-92.

This sequence belongs to the phospholipase A2 family. Group I subfamily. D49 sub-subfamily. Monomer. The cofactor is Ca(2+). In terms of tissue distribution, expressed by the venom gland.

It is found in the secreted. The enzyme catalyses a 1,2-diacyl-sn-glycero-3-phosphocholine + H2O = a 1-acyl-sn-glycero-3-phosphocholine + a fatty acid + H(+). Its function is as follows. PLA2 catalyzes the calcium-dependent hydrolysis of the 2-acyl groups in 3-sn-phosphoglycerides. The chain is Basic phospholipase A2 4 from Laticauda semifasciata (Black-banded sea krait).